The sequence spans 744 residues: MQDQNNSNTPKKKKLSFWGIIGIVASILVLLVIAYIIYYYVSQTTVLKRDFSFLNRAIQEAAKSATDDIYFKSIVDNPYNNSLVATMQLPENVWAALNGMTSTSTRIRVVTFEVHATTSMKNILYNEIISSIGGATPSFSRGLAMILGYSENGVTKAGEFLSTGAPTESIWSTVLRYGTNIIFLLLFAASFIFMFMSFRSQRGTGGLLDNKSVAQRIYSNKKFSDIAGNEEVKEEVKELVDYLKNPKKYSTAGARIPKGILLGGPPGTGKTLIAKATAGEANVPFFFISASNFVEMFVGLGAKRVRDMFEEARKTAPAIIFIDELDAVGRSRGAGIGGGNDEREQTLNQLLVEMDGIKENSGILIMAATNRSDVLDPALLRPGRFDRTITVGLPDIKEREAILKLHAKGKRIANNVSFMMIARRTPGFSGAQLENVINEASLLSVRENTNVITLPQLDEAIDRVMAGPAKKSRTISEKENAAVAYHEAGHAVVGIKIKGGNKVQKITIIPRGHAGGYNLMMPEEEKYNRSKAELIAIITSFMGGRVAEAIIYGKDNVSTGASDDIAKATRIARKMVTEWGLSELGPIKYEEDTDNPFLGRDYMKNASFSAQVGQEIDQEIRKIILAAEANAHKIISENRELLELIKDALIINETIVAEEIEYIAKNMKLPPAITKTKEDLHEEYSDQDFDNLFNEVSGKKIISEDKYVDDLNKEIKQLEEKIEANKSSSKSTVNEEKSKDEKNN.

Residues 1 to 16 (MQDQNNSNTPKKKKLS) lie on the Cytoplasmic side of the membrane. Residues 17–37 (FWGIIGIVASILVLLVIAYII) traverse the membrane as a helical segment. The Extracellular portion of the chain corresponds to 38-177 (YYYVSQTTVL…ESIWSTVLRY (140 aa)). A helical membrane pass occupies residues 178-198 (GTNIIFLLLFAASFIFMFMSF). The Cytoplasmic portion of the chain corresponds to 199–744 (RSQRGTGGLL…EEKSKDEKNN (546 aa)). 264–271 (GPPGTGKT) is a binding site for ATP. His-486 is a Zn(2+) binding site. Glu-487 is a catalytic residue. Residues His-490 and Asp-564 each coordinate Zn(2+). Residues 722–744 (IEANKSSSKSTVNEEKSKDEKNN) form a disordered region. A compositionally biased stretch (basic and acidic residues) spans 733–744 (VNEEKSKDEKNN).

It in the central section; belongs to the AAA ATPase family. The protein in the C-terminal section; belongs to the peptidase M41 family. As to quaternary structure, homohexamer. It depends on Zn(2+) as a cofactor.

It localises to the cell membrane. Acts as a processive, ATP-dependent zinc metallopeptidase for both cytoplasmic and membrane proteins. Plays a role in the quality control of integral membrane proteins. In Metamycoplasma arthritidis (strain 158L3-1) (Mycoplasma arthritidis), this protein is ATP-dependent zinc metalloprotease FtsH.